The chain runs to 326 residues: Tetraacyldisaccharide 4'-kinase (326 aa).

Residue 52 to 59 (TLGGAGKT) participates in ATP binding.

Belongs to the LpxK family.

It carries out the reaction a lipid A disaccharide + ATP = a lipid IVA + ADP + H(+). Its pathway is glycolipid biosynthesis; lipid IV(A) biosynthesis; lipid IV(A) from (3R)-3-hydroxytetradecanoyl-[acyl-carrier-protein] and UDP-N-acetyl-alpha-D-glucosamine: step 6/6. Functionally, transfers the gamma-phosphate of ATP to the 4'-position of a tetraacyldisaccharide 1-phosphate intermediate (termed DS-1-P) to form tetraacyldisaccharide 1,4'-bis-phosphate (lipid IVA). In Methylobacterium radiotolerans (strain ATCC 27329 / DSM 1819 / JCM 2831 / NBRC 15690 / NCIMB 10815 / 0-1), this protein is Tetraacyldisaccharide 4'-kinase.